A 481-amino-acid polypeptide reads, in one-letter code: Zinc metalloproteinase/disintegrin (481 aa).

The first 20 residues, 1-20, serve as a signal peptide directing secretion; that stretch reads MIQVLLVTICLAVFPYQGSS. Positions 21-190 are excised as a propeptide; the sequence is IILESGNVDD…KASQLYLTPE (170 aa). The Peptidase M12B domain maps to 197–392; that stretch reads RYIKLAIVVD…DNPQCILNAP (196 aa). 3 disulfides stabilise this stretch: C308/C387, C349/C371, and C351/C354. H333 is a binding site for Zn(2+). E334 is a catalytic residue. Residues H337 and H343 each coordinate Zn(2+). A propeptide spanning residues 393-408 is cleaved from the precursor; sequence LRTDTVSTPVSGNEFL. One can recognise a Disintegrin domain in the interval 400–481; it reads TPVSGNEFLE…GDCPRNPFHA (82 aa). 6 disulfide bridges follow: C414/C429, C416/C424, C423/C446, C437/C443, C442/C467, and C455/C474. The Cell attachment site motif lies at 459–461; it reads RGD.

This sequence belongs to the venom metalloproteinase (M12B) family. P-II subfamily. P-IIa sub-subfamily. In terms of assembly, monomer. Zn(2+) is required as a cofactor. In terms of tissue distribution, expressed by the venom gland.

Its subcellular location is the secreted. In terms of biological role, impairs hemostasis in the envenomed animal. Disintegrin elegantin-2a-f: inhibits platelet aggregation induced by ADP, thrombin, platelet-activating factor and collagen. Acts by inhibiting fibrinogen interaction with platelet receptors GPIIb/GPIIIa (ITGA2B/ITGB3). The protein is Zinc metalloproteinase/disintegrin of Protobothrops elegans (Elegant pitviper).